The following is a 513-amino-acid chain: ATP synthase subunit alpha (513 aa).

Residue 169 to 176 (GDRQTGKS) coordinates ATP.

It belongs to the ATPase alpha/beta chains family. F-type ATPases have 2 components, CF(1) - the catalytic core - and CF(0) - the membrane proton channel. CF(1) has five subunits: alpha(3), beta(3), gamma(1), delta(1), epsilon(1). CF(0) has three main subunits: a(1), b(2) and c(9-12). The alpha and beta chains form an alternating ring which encloses part of the gamma chain. CF(1) is attached to CF(0) by a central stalk formed by the gamma and epsilon chains, while a peripheral stalk is formed by the delta and b chains.

It is found in the cell inner membrane. It carries out the reaction ATP + H2O + 4 H(+)(in) = ADP + phosphate + 5 H(+)(out). Produces ATP from ADP in the presence of a proton gradient across the membrane. The alpha chain is a regulatory subunit. In Blochmanniella floridana, this protein is ATP synthase subunit alpha.